Consider the following 354-residue polypeptide: Homer protein homolog 1 (354 aa).

In terms of domain architecture, WH1 spans 1-110 (MGEQPIFSTR…EKFQEFKEAA (110 aa)). The residue at position 2 (Gly-2) is an N-acetylglycine. The tract at residues 114-173 (KEKSQEKMELTSTPSQESAGGDLQSPLTPESINGTDDERTPDVTQNSEPRAEPTQNALPF) is disordered. Composition is skewed to polar residues over residues 138–147 (SPLTPESING) and 155–173 (DVTQ…ALPF). The stretch at 181–352 (KHWEAELATL…LRDNLAKLLE (172 aa)) forms a coiled coil. The segment at 290 to 354 (KLQEVEIRNK…DNLAKLLECS (65 aa)) is required for tetramerization. At Ser-306 the chain carries Phosphoserine.

It belongs to the Homer family. Tetramer; this tetrameric structure is critical for forming the high-order complex with SHANK1, which in turn is necessary for the structural and functional integrity of dendritic spines. Interacts with GRM1, GRM5, ITPR1, DNM3, RYR1, RYR2 and SHANK3. Interacts with IFT57 and OPHN1. Isoform 1 encodes a coiled-coil structure that mediates homo- and heteromultimerization. Interacts with SHANK1; forms high-order polymerized complex with a mesh-like network structure, at least composed of SHANK1, HOMER1 and DLGAP1; the complex formation is SHANK1 multimerization dependent. Interacts with NFATC4. Interacts with DAGLA (via PPXXF motif); this interaction is required for the cell membrane localization of DAGLA. Interacts with SRGAP2.

The protein localises to the cytoplasm. It localises to the postsynaptic density. The protein resides in the synapse. Its subcellular location is the cell projection. It is found in the dendritic spine. Postsynaptic density scaffolding protein. Binds and cross-links cytoplasmic regions of GRM1, GRM5, ITPR1, DNM3, RYR1, RYR2, SHANK1 and SHANK3. By physically linking GRM1 and GRM5 with ER-associated ITPR1 receptors, it aids the coupling of surface receptors to intracellular calcium release. May also couple GRM1 to PI3 kinase through its interaction with AGAP2. Isoform 1 regulates the trafficking and surface expression of GRM5. Isoform 3 acts as a natural dominant negative, in dynamic competition with constitutively expressed isoform 1 to regulate synaptic metabotropic glutamate function. Isoform 3, may be involved in the structural changes that occur at synapses during long-lasting neuronal plasticity and development. Forms a high-order complex with SHANK1, which in turn is necessary for the structural and functional integrity of dendritic spines. Negatively regulates T cell activation by inhibiting the calcineurin-NFAT pathway. Acts by competing with calcineurin/PPP3CA for NFAT protein binding, hence preventing NFAT activation by PPP3CA. The polypeptide is Homer protein homolog 1 (Homo sapiens (Human)).